A 222-amino-acid chain; its full sequence is Probable transaldolase (222 aa).

Catalysis depends on Lys91, which acts as the Schiff-base intermediate with substrate.

Belongs to the transaldolase family. Type 3B subfamily.

It localises to the cytoplasm. The catalysed reaction is D-sedoheptulose 7-phosphate + D-glyceraldehyde 3-phosphate = D-erythrose 4-phosphate + beta-D-fructose 6-phosphate. It participates in carbohydrate degradation; pentose phosphate pathway; D-glyceraldehyde 3-phosphate and beta-D-fructose 6-phosphate from D-ribose 5-phosphate and D-xylulose 5-phosphate (non-oxidative stage): step 2/3. Transaldolase is important for the balance of metabolites in the pentose-phosphate pathway. The polypeptide is Probable transaldolase (Chlorobaculum parvum (strain DSM 263 / NCIMB 8327) (Chlorobium vibrioforme subsp. thiosulfatophilum)).